The primary structure comprises 975 residues: Translation initiation factor IF-2 (975 aa).

A compositionally biased stretch (basic and acidic residues) spans 48–63; it reads DHLRKSHGATDGDKRK. 2 disordered regions span residues 48 to 84 and 96 to 388; these read DHLR…GKAR and FVKR…QAPT. Residues 104-115 show a composition bias toward low complexity; the sequence is ETGADQAQAQTD. Residues 120 to 177 are compositionally biased toward basic and acidic residues; it reads AELKRREEEARREAELLEKQAQELRERQERLEREEAERRAREEAAEAERRRAEEEAAA. Positions 178-211 are enriched in low complexity; the sequence is KRAAAAQAEAAQQAAAAREQAQRAQSEPAEQSAQ. Positions 212–263 are enriched in basic and acidic residues; that stretch reads DEARAAAERAAQREAAKKAEDAAREAADKARAEQEEIRKRREAAEAEARAIR. The span at 302–330 shows a compositional bias: low complexity; the sequence is KPAGEAAAARPAAKKPASGAPAPAAAPAG. Positions 359–372 are enriched in gly residues; that stretch reads SSGGVDRGWRGGPK. The region spanning 475–644 is the tr-type G domain; sequence PRPPVVTVMG…LLQAEVLELK (170 aa). A G1 region spans residues 484–491; it reads GHVDHGKT. 484-491 is a binding site for GTP; that stretch reads GHVDHGKT. Residues 509-513 are G2; it reads GITQH. The segment at 530–533 is G3; that stretch reads DTPG. GTP contacts are provided by residues 530-534 and 584-587; these read DTPGH and NKID. Positions 584–587 are G4; that stretch reads NKID. The tract at residues 620-622 is G5; sequence SAK.

The protein belongs to the TRAFAC class translation factor GTPase superfamily. Classic translation factor GTPase family. IF-2 subfamily.

The protein resides in the cytoplasm. Its function is as follows. One of the essential components for the initiation of protein synthesis. Protects formylmethionyl-tRNA from spontaneous hydrolysis and promotes its binding to the 30S ribosomal subunits. Also involved in the hydrolysis of GTP during the formation of the 70S ribosomal complex. This chain is Translation initiation factor IF-2, found in Burkholderia pseudomallei (strain 1710b).